The chain runs to 689 residues: Glycine--tRNA ligase beta subunit (689 aa).

Belongs to the class-II aminoacyl-tRNA synthetase family. In terms of assembly, tetramer of two alpha and two beta subunits.

The protein resides in the cytoplasm. It carries out the reaction tRNA(Gly) + glycine + ATP = glycyl-tRNA(Gly) + AMP + diphosphate. The protein is Glycine--tRNA ligase beta subunit of Lacticaseibacillus casei (strain BL23) (Lactobacillus casei).